The chain runs to 677 residues: Opioid growth factor receptor (677 aa).

At Met-1 the chain carries N-acetylmethionine. Residues 1-29 (MDDPDCDSTWEEDEEDAEDAEDEDCEDGE) are compositionally biased toward acidic residues. The segment at 1 to 63 (MDDPDCDSTW…SSFQSRMTGS (63 aa)) is disordered. Polar residues predominate over residues 54–63 (SSFQSRMTGS). Positions 267–283 (RRQLVHFAWEHFRPRCK) match the Bipartite nuclear localization signal motif. The tract at residues 295-407 (FKPSSLPHPL…EPGPQSASEV (113 aa)) is disordered. Ser-299 and Ser-315 each carry phosphoserine. Basic and acidic residues-rich tracts occupy residues 305 to 323 (EGSR…DHEA) and 331 to 345 (GPEH…DEGP). Ser-349, Ser-361, Ser-378, Ser-382, Ser-403, and Ser-420 each carry phosphoserine. Positions 361–395 (SQGDEAGGHGEDRPEPLSPKESKKRKLELSRREQP) are enriched in basic and acidic residues. The span at 421–431 (QGSLRTGTQEV) shows a compositional bias: polar residues. Residues 421 to 677 (QGSLRTGTQE…VESSAKSGKP (257 aa)) form a disordered region. A compositionally biased stretch (low complexity) spans 466–476 (GDSAAVASGGA). Phosphoserine is present on Ser-484. 7 consecutive repeat copies span residues 517–536 (SPSE…EPAE), 537–556 (SPSE…EPAE), 557–576 (SPSE…EPAE), 577–596 (SPSE…EPAE), 597–616 (SPSE…EPAE), 617–636 (SPSE…EPAE), and 637–656 (SPSE…EPAK). The tract at residues 517-656 (SPSETPGPSP…AGPTRDEPAK (140 aa)) is 7 X 20 AA approximate tandem repeats of [ST]-P-S-E-T-P-G-P-[SR]-P-A-G-P-[AT]-[GR]-D-E-P-A-[EK]. The span at 528-538 (GPAGDEPAESP) shows a compositional bias: low complexity. A phosphoserine mark is found at Ser-537 and Ser-557. Phosphoserine is present on residues Ser-617 and Ser-637.

This sequence belongs to the opioid growth factor receptor family. In terms of tissue distribution, highly expressed in the heart and liver, moderately in skeletal muscle and kidney and to a lesser extent in brain and pancreas. Expressed in fetal tissues including liver and kidney.

It is found in the cytoplasm. The protein resides in the nucleus. Receptor for opioid growth factor (OGF), also known as Met-enkephalin. Seems to be involved in growth regulation. This chain is Opioid growth factor receptor (OGFR), found in Homo sapiens (Human).